A 402-amino-acid polypeptide reads, in one-letter code: Prophage integrase IntZ (402 aa).

Residues Ala-103 to Val-183 form the Core-binding (CB) domain. In terms of domain architecture, Tyr recombinase spans Gly-206–Met-381. Residues Arg-244, Lys-271, His-332, Arg-335, and His-359 contribute to the active site. Catalysis depends on Tyr-368, which acts as the O-(3'-phospho-DNA)-tyrosine intermediate.

It belongs to the 'phage' integrase family.

Its function is as follows. Integrase is necessary for integration of the phage into the host genome by site-specific recombination. In conjunction with excisionase, integrase is also necessary for excision of the prophage from the host genome. The sequence is that of Prophage integrase IntZ (intZ) from Escherichia coli (strain K12).